The primary structure comprises 642 residues: 1-deoxy-D-xylulose-5-phosphate synthase 2 (642 aa).

Residues H79 and 120 to 122 (AHS) contribute to the thiamine diphosphate site. A Mg(2+)-binding site is contributed by D155. Residues 156–157 (GS), N184, Y293, and E375 each bind thiamine diphosphate. Mg(2+) is bound at residue N184.

It belongs to the transketolase family. DXPS subfamily. Homodimer. Requires Mg(2+) as cofactor. Thiamine diphosphate is required as a cofactor.

It catalyses the reaction D-glyceraldehyde 3-phosphate + pyruvate + H(+) = 1-deoxy-D-xylulose 5-phosphate + CO2. It functions in the pathway metabolic intermediate biosynthesis; 1-deoxy-D-xylulose 5-phosphate biosynthesis; 1-deoxy-D-xylulose 5-phosphate from D-glyceraldehyde 3-phosphate and pyruvate: step 1/1. Catalyzes the acyloin condensation reaction between C atoms 2 and 3 of pyruvate and glyceraldehyde 3-phosphate to yield 1-deoxy-D-xylulose-5-phosphate (DXP). The chain is 1-deoxy-D-xylulose-5-phosphate synthase 2 from Roseobacter denitrificans (strain ATCC 33942 / OCh 114) (Erythrobacter sp. (strain OCh 114)).